A 179-amino-acid chain; its full sequence is Plasmid-derived single-stranded DNA-binding protein (179 aa).

The SSB domain maps to Ile-6 to Gln-110. Residues Trp-55 to Phe-61 mediate DNA binding. A disordered region spans residues Gly-117–Phe-179. Residues Ala-118–Pro-132 are compositionally biased toward polar residues. Residues Gly-145 to Lys-155 show a composition bias toward basic residues. A compositionally biased stretch (acidic residues) spans Glu-167–Phe-179.

As to quaternary structure, homotetramer.

May contribute to the conjugative processing of DNA. It has a functional relationship with Psi (plasmid-mediated sos inhibition) proteins. The protein is Plasmid-derived single-stranded DNA-binding protein (ssbF) of Escherichia coli (strain K12).